A 231-amino-acid polypeptide reads, in one-letter code: Putative 3-methyladenine DNA glycosylase (231 aa).

This sequence belongs to the DNA glycosylase MPG family.

This is Putative 3-methyladenine DNA glycosylase from Pseudomonas fluorescens (strain Pf0-1).